A 141-amino-acid polypeptide reads, in one-letter code: 3-hydroxyacyl-[acyl-carrier-protein] dehydratase FabZ (141 aa).

His-49 is an active-site residue.

The protein belongs to the thioester dehydratase family. FabZ subfamily.

It localises to the cytoplasm. It catalyses the reaction a (3R)-hydroxyacyl-[ACP] = a (2E)-enoyl-[ACP] + H2O. Functionally, involved in unsaturated fatty acids biosynthesis. Catalyzes the dehydration of short chain beta-hydroxyacyl-ACPs and long chain saturated and unsaturated beta-hydroxyacyl-ACPs. The chain is 3-hydroxyacyl-[acyl-carrier-protein] dehydratase FabZ from Clostridium acetobutylicum (strain ATCC 824 / DSM 792 / JCM 1419 / IAM 19013 / LMG 5710 / NBRC 13948 / NRRL B-527 / VKM B-1787 / 2291 / W).